We begin with the raw amino-acid sequence, 152 residues long: UPF0719 transmembrane protein MT2674.1 (152 aa).

Transmembrane regions (helical) follow at residues 21 to 41, 62 to 82, 92 to 112, and 131 to 151; these read VATV…FLMV, VVLA…AIYA, IGVA…LVIL, and PAVF…AAAL.

It belongs to the UPF0719 family.

Its subcellular location is the cell membrane. The protein is UPF0719 transmembrane protein MT2674.1 of Mycobacterium tuberculosis (strain CDC 1551 / Oshkosh).